The following is a 305-amino-acid chain: Plant-type L-asparaginase (305 aa).

The active-site Nucleophile is threonine 175. Substrate is bound by residues 202-205 (RVGD) and 224-227 (TGLG).

It belongs to the Ntn-hydrolase family. As to quaternary structure, heterotetramer of two alpha and two beta chains arranged as a dimer of alpha/beta heterodimers. Autocleaved. Generates the alpha and beta subunits. The N-terminal residue of the beta subunit is thought to be responsible for the nucleophile hydrolase activity.

It carries out the reaction L-asparagine + H2O = L-aspartate + NH4(+). Catalyzes the hydrolysis of L-asparagine into L-aspartate and ammonia. In Pyrococcus horikoshii (strain ATCC 700860 / DSM 12428 / JCM 9974 / NBRC 100139 / OT-3), this protein is Plant-type L-asparaginase.